The following is a 369-amino-acid chain: uncharacterized protein (369 aa).

To A.pernix APE1276 and APE1804.

This is an uncharacterized protein from Saccharolobus solfataricus (strain ATCC 35092 / DSM 1617 / JCM 11322 / P2) (Sulfolobus solfataricus).